The following is a 239-amino-acid chain: Ribosomal RNA small subunit methyltransferase G (239 aa).

S-adenosyl-L-methionine is bound by residues G79, F84, 130–131 (AE), and R149.

Belongs to the methyltransferase superfamily. RNA methyltransferase RsmG family.

The protein resides in the cytoplasm. In terms of biological role, specifically methylates the N7 position of a guanine in 16S rRNA. This Lactobacillus johnsonii (strain CNCM I-12250 / La1 / NCC 533) protein is Ribosomal RNA small subunit methyltransferase G.